We begin with the raw amino-acid sequence, 85 residues long: Neurtoxin 10 (85 aa).

Positions 1 to 23 are cleaved as a signal peptide; that stretch reads MKFCVAVSLLIIASMAGVISVSG. One can recognise an LCN-type CS-alpha/beta domain in the interval 24 to 85; sequence YDVYPRDYAE…NFLSVIWKHC (62 aa). 3 cysteine pairs are disulfide-bonded: C38–C60, C46–C65, and C50–C67.

Belongs to the long (3 C-C) scorpion toxin superfamily. As to expression, expressed by the venom gland.

The protein localises to the secreted. This chain is Neurtoxin 10, found in Lychas mucronatus (Chinese swimming scorpion).